The following is a 323-amino-acid chain: MIRSIVRGFGAALPKRVMTNSEIEGVVETSDEWIVQRTGIRQRYIAGEGETTASLGEAAARAALDNAGLTPADIDLIILATSTPDNTFPATAVNIQNRLGMTHGFAFDMQAVCSGFVYAVATADLYIRGGMAKRVLVIGAETFSRILDWKDRTTCVLFGDGAGALVIEAGEGEGTSSDRGILTSQLRSDGSHKDKLYVDGGPSTTGTVGHLRMEGREVFKHAVGMITDVIEQAFEATGTTADDLDWLVPHQANKRIIDGSAKKLNIDPEKVVITVDKHGNTSAASIPLALAVAASDGRIKKGDLVMLEAMGGGFTWGAVLLRW.

Active-site residues include Cys-113 and His-250. Residues 251–255 (QANKR) are ACP-binding. Asn-280 is an active-site residue.

This sequence belongs to the thiolase-like superfamily. FabH family. In terms of assembly, homodimer.

The protein localises to the cytoplasm. It carries out the reaction malonyl-[ACP] + acetyl-CoA + H(+) = 3-oxobutanoyl-[ACP] + CO2 + CoA. Its pathway is lipid metabolism; fatty acid biosynthesis. Its function is as follows. Catalyzes the condensation reaction of fatty acid synthesis by the addition to an acyl acceptor of two carbons from malonyl-ACP. Catalyzes the first condensation reaction which initiates fatty acid synthesis and may therefore play a role in governing the total rate of fatty acid production. Possesses both acetoacetyl-ACP synthase and acetyl transacylase activities. Its substrate specificity determines the biosynthesis of branched-chain and/or straight-chain of fatty acids. The chain is Beta-ketoacyl-[acyl-carrier-protein] synthase III from Agrobacterium fabrum (strain C58 / ATCC 33970) (Agrobacterium tumefaciens (strain C58)).